A 465-amino-acid polypeptide reads, in one-letter code: Ribulose bisphosphate carboxylase large chain (465 aa).

Residue Lys-4 is modified to N6,N6,N6-trimethyllysine. Substrate is bound by residues Asn-113 and Thr-163. Catalysis depends on Lys-165, which acts as the Proton acceptor. Lys-167 serves as a coordination point for substrate. The Mg(2+) site is built by Lys-191, Asp-193, and Glu-194. Lys-191 carries the N6-carboxylysine modification. His-284 acts as the Proton acceptor in catalysis. Residues Arg-285, His-317, and Ser-369 each contribute to the substrate site.

This sequence belongs to the RuBisCO large chain family. Type I subfamily. As to quaternary structure, heterohexadecamer of 8 large chains and 8 small chains. It depends on Mg(2+) as a cofactor.

It is found in the plastid. The protein resides in the chloroplast. The catalysed reaction is 2 (2R)-3-phosphoglycerate + 2 H(+) = D-ribulose 1,5-bisphosphate + CO2 + H2O. The enzyme catalyses D-ribulose 1,5-bisphosphate + O2 = 2-phosphoglycolate + (2R)-3-phosphoglycerate + 2 H(+). Functionally, ruBisCO catalyzes two reactions: the carboxylation of D-ribulose 1,5-bisphosphate, the primary event in carbon dioxide fixation, as well as the oxidative fragmentation of the pentose substrate in the photorespiration process. Both reactions occur simultaneously and in competition at the same active site. This Sarracenia flava (Yellow pitcher plant) protein is Ribulose bisphosphate carboxylase large chain.